The chain runs to 321 residues: Probable NAD(P)H-dependent D-xylose reductase xyl1 (321 aa).

Y50 (proton donor) is an active-site residue. Substrate is bound at residue H112. NAD(+) is bound by residues 166-167, 215-224, and 271-281; these read SN, SSFGPLSFVE, and KSNDPTRLAQN.

Belongs to the aldo/keto reductase family.

It carries out the reaction xylitol + NAD(+) = D-xylose + NADH + H(+). The catalysed reaction is xylitol + NADP(+) = D-xylose + NADPH + H(+). The protein operates within carbohydrate metabolism; D-xylose degradation. Its function is as follows. Catalyzes the initial reaction in the xylose utilization pathway by reducing D-xylose into xylitol. Xylose is a major component of hemicelluloses such as xylan. Most fungi utilize D-xylose via three enzymatic reactions, xylose reductase (XR), xylitol dehydrogenase (XDH), and xylulokinase, to form xylulose 5-phosphate, which enters pentose phosphate pathway. The polypeptide is Probable NAD(P)H-dependent D-xylose reductase xyl1 (xyl1) (Neosartorya fischeri (strain ATCC 1020 / DSM 3700 / CBS 544.65 / FGSC A1164 / JCM 1740 / NRRL 181 / WB 181) (Aspergillus fischerianus)).